The following is a 162-amino-acid chain: Caveolin-2 (162 aa).

At 1–86 (MGLETEKADV…FEISKYVMYK (86 aa)) the chain is on the cytoplasmic side. Position 19 is a phosphotyrosine; by SRC (Tyr19). Ser20 and Ser23 each carry phosphoserine. Phosphotyrosine; by SRC is present on Tyr27. Residue Ser36 is modified to Phosphoserine. The segment at residues 87–107 (FLTVFLAIPLAFIAGILFATL) is an intramembrane region (helical). Residues 108 to 162 (SCLHIWILMPFVKTCLMVLPSVQTIWKSVTDVFIAPLCTSIGRSFSSVSLQLSQD) lie on the Cytoplasmic side of the membrane.

The protein belongs to the caveolin family. As to quaternary structure, monomer or homodimer. Interacts with CAV1; the interaction forms a stable heterooligomeric complex that is required for targeting to lipid rafts and for caveolae formation. Tyrosine phosphorylated forms do not form heterooligomers with the Tyr-19-phosphorylated form existing as a monomer or dimer, and the Tyr-27-form as a monomer only. Interacts (tyrosine phosphorylated form) with the SH2 domain-containing proteins, RASA1, NCK1 and SRC. Interacts (tyrosine phosphorylated form) with INSR, the interaction (Tyr-27-phosphorylated form) is increased on insulin stimulation. Interacts (Tyr-19 phosphorylated form) with MAPK1 (phosphorylated form); the interaction, promoted by insulin, leads to nuclear location and MAPK1 activation. Interacts with STAT3; the interaction is increased on insulin-induced tyrosine phosphorylation leading to STAT activation. In terms of processing, phosphorylated on serine and tyrosine residues. CAV1 promotes phosphorylation on Ser-23 which then targets the complex to the plasma membrane, lipid rafts and caveolae. Phosphorylation on Ser-36 appears to modulate mitosis in endothelial cells. Phosphorylation on both Tyr-19 and Tyr-27 is required for insulin-induced 'Ser-727' phosphorylation of STAT3 and its activation. Phosphorylation on Tyr-19 is required for insulin-induced phosphorylation of MAPK1 and DNA binding of STAT3. Tyrosine phosphorylation is induced by both EGF and insulin (By. similarity).

Its subcellular location is the nucleus. It localises to the cytoplasm. The protein localises to the golgi apparatus membrane. It is found in the cell membrane. The protein resides in the membrane. Its subcellular location is the caveola. In terms of biological role, may act as a scaffolding protein within caveolar membranes. Interacts directly with G-protein alpha subunits and can functionally regulate their activity. Acts as an accessory protein in conjunction with CAV1 in targeting to lipid rafts and driving caveolae formation. The Ser-36 phosphorylated form has a role in modulating mitosis in endothelial cells. Positive regulator of cellular mitogenesis of the MAPK signaling pathway. Required for the insulin-stimulated nuclear translocation and activation of MAPK1 and STAT3, and the subsequent regulation of cell cycle progression. The sequence is that of Caveolin-2 (CAV2) from Papio anubis (Olive baboon).